The chain runs to 176 residues: Translation initiation factor IF-3 (176 aa).

It belongs to the IF-3 family. Monomer.

It localises to the cytoplasm. Functionally, IF-3 binds to the 30S ribosomal subunit and shifts the equilibrium between 70S ribosomes and their 50S and 30S subunits in favor of the free subunits, thus enhancing the availability of 30S subunits on which protein synthesis initiation begins. The sequence is that of Translation initiation factor IF-3 from Nitratidesulfovibrio vulgaris (strain ATCC 29579 / DSM 644 / CCUG 34227 / NCIMB 8303 / VKM B-1760 / Hildenborough) (Desulfovibrio vulgaris).